The chain runs to 330 residues: Transcription factor zip1 (330 aa).

A compositionally biased stretch (basic and acidic residues) spans 133-148; that stretch reads SKETQEKTSSQRELFE. Disordered regions lie at residues 133–165 and 238–277; these read SKETQEKTSSQRELFEQKSSVASASKDNVSSSS and PSLSSYKGAQSPNANSKRTKATSAIRTAAEEDKRRRNTAA. Residues 150-165 show a composition bias toward low complexity; sequence KSSVASASKDNVSSSS. Polar residues predominate over residues 244 to 262; it reads KGAQSPNANSKRTKATSAI. The 64-residue stretch at 264–327 folds into the bZIP domain; it reads TAAEEDKRRR…NWLKGLIRPT (64 aa). Residues 270-288 form a basic motif region; it reads KRRRNTAASARFRIKKKLK. The interval 292–320 is leucine-zipper; sequence LERTAKELTEKVAILETRVRELEMENNWL.

This sequence belongs to the bZIP family. As to quaternary structure, interacts with pof1.

It localises to the nucleus. Functionally, mediates cell growth arrest in response to cadmium exposure, which is essential to maintain cell viability. Regulates cadmium stress specific genes. The polypeptide is Transcription factor zip1 (zip1) (Schizosaccharomyces pombe (strain 972 / ATCC 24843) (Fission yeast)).